The chain runs to 285 residues: MRRIAVIAKPQKDELASLLPELLAWLHGHGYDPVIDDIAATYTSEARIVPRADLPNENPELVIVLGGDGTLLAAARVFAKTGVPILSVNLGSLGFLTEVPLGDLYRHLEGWAQNCCNIEQRAMLHCELRRDGHQVCEYEALNDVVVSKGAIARMGDFRIDLDGALVAAFRADGVIISTPTGSTAYSLAANGPILAPNVDALIVTPVCPHLLTLRPLVVQGNADLKLKVAGIPDQTYLTVDGQEAIALCVGDEIHCRKSVYTVKLVRLGSTGFFDVLRAKLKWGER.

Residue Asp68 is the Proton acceptor of the active site. NAD(+) contacts are provided by residues 68–69, 142–143, Arg153, Arg170, Asp172, and Gln242; these read DG and ND.

This sequence belongs to the NAD kinase family. It depends on a divalent metal cation as a cofactor.

The protein resides in the cytoplasm. The enzyme catalyses NAD(+) + ATP = ADP + NADP(+) + H(+). Its function is as follows. Involved in the regulation of the intracellular balance of NAD and NADP, and is a key enzyme in the biosynthesis of NADP. Catalyzes specifically the phosphorylation on 2'-hydroxyl of the adenosine moiety of NAD to yield NADP. The chain is NAD kinase from Acidobacterium capsulatum (strain ATCC 51196 / DSM 11244 / BCRC 80197 / JCM 7670 / NBRC 15755 / NCIMB 13165 / 161).